The primary structure comprises 213 residues: Urease accessory protein UreG (213 aa).

17–24 (GPVGSGKT) lines the GTP pocket.

It belongs to the SIMIBI class G3E GTPase family. UreG subfamily. In terms of assembly, homodimer. UreD, UreF and UreG form a complex that acts as a GTP-hydrolysis-dependent molecular chaperone, activating the urease apoprotein by helping to assemble the nickel containing metallocenter of UreC. The UreE protein probably delivers the nickel.

It is found in the cytoplasm. In terms of biological role, facilitates the functional incorporation of the urease nickel metallocenter. This process requires GTP hydrolysis, probably effectuated by UreG. This is Urease accessory protein UreG from Delftia acidovorans (strain DSM 14801 / SPH-1).